The sequence spans 49 residues: Large ribosomal subunit protein bL33 (49 aa).

Belongs to the bacterial ribosomal protein bL33 family.

The sequence is that of Large ribosomal subunit protein bL33 from Clostridioides difficile (strain 630) (Peptoclostridium difficile).